Consider the following 451-residue polypeptide: Phosphoglucosamine mutase (451 aa).

Ser-101 (phosphoserine intermediate) is an active-site residue. The Mg(2+) site is built by Ser-101, Asp-240, Asp-242, and Asp-244. At Ser-101 the chain carries Phosphoserine.

This sequence belongs to the phosphohexose mutase family. It depends on Mg(2+) as a cofactor. Activated by phosphorylation.

The enzyme catalyses alpha-D-glucosamine 1-phosphate = D-glucosamine 6-phosphate. Functionally, catalyzes the conversion of glucosamine-6-phosphate to glucosamine-1-phosphate. The polypeptide is Phosphoglucosamine mutase (Streptococcus pyogenes serotype M18 (strain MGAS8232)).